Here is a 376-residue protein sequence, read N- to C-terminus: Flap endonuclease 1 (376 aa).

Residues 1–105 (MGIKGLSKLL…GELNKRKENA (105 aa)) form an N-domain region. Residue Asp34 coordinates Mg(2+). 2 residues coordinate DNA: Arg47 and Arg71. Residues Asp87, Glu159, Glu161, Asp180, and Asp182 each coordinate Mg(2+). Residues 123–254 (QAKKLMKRTA…ITAFELIQQY (132 aa)) form an I-domain region. Glu159 provides a ligand contact to DNA. 2 residues coordinate DNA: Gly232 and Asp234. Asp234 provides a ligand contact to Mg(2+). Residues 336–344 (AQGRLDSFF) are interaction with PCNA. Positions 352 to 376 (SKSEAASGVKRKKPTTKAKESRKKK) are disordered. Over residues 360–376 (VKRKKPTTKAKESRKKK) the composition is skewed to basic residues.

This sequence belongs to the XPG/RAD2 endonuclease family. FEN1 subfamily. As to quaternary structure, interacts with PCNA. Three molecules of FEN1 bind to one PCNA trimer with each molecule binding to one PCNA monomer. PCNA stimulates the nuclease activity without altering cleavage specificity. Requires Mg(2+) as cofactor. In terms of processing, phosphorylated. Phosphorylation upon DNA damage induces relocalization to the nuclear plasma.

The protein resides in the nucleus. It is found in the nucleolus. It localises to the nucleoplasm. The protein localises to the mitochondrion. Functionally, structure-specific nuclease with 5'-flap endonuclease and 5'-3' exonuclease activities involved in DNA replication and repair. During DNA replication, cleaves the 5'-overhanging flap structure that is generated by displacement synthesis when DNA polymerase encounters the 5'-end of a downstream Okazaki fragment. It enters the flap from the 5'-end and then tracks to cleave the flap base, leaving a nick for ligation. Also involved in the long patch base excision repair (LP-BER) pathway, by cleaving within the apurinic/apyrimidinic (AP) site-terminated flap. Acts as a genome stabilization factor that prevents flaps from equilibrating into structures that lead to duplications and deletions. Also possesses 5'-3' exonuclease activity on nicked or gapped double-stranded DNA, and exhibits RNase H activity. Also involved in replication and repair of rDNA and in repairing mitochondrial DNA. The sequence is that of Flap endonuclease 1 from Entamoeba dispar (strain ATCC PRA-260 / SAW760).